Reading from the N-terminus, the 84-residue chain is MARENKKELIGKVVSDKMSKTVVVEIVQRKMHPIYHKYLKVSRRVKAHDEREESKLGDKVKIVESRPISKEKRWRLIEILERSK.

The protein belongs to the universal ribosomal protein uS17 family. Part of the 30S ribosomal subunit.

One of the primary rRNA binding proteins, it binds specifically to the 5'-end of 16S ribosomal RNA. In Borrelia duttonii (strain Ly), this protein is Small ribosomal subunit protein uS17.